A 178-amino-acid polypeptide reads, in one-letter code: Crossover junction endodeoxyribonuclease RuvC (178 aa).

Active-site residues include aspartate 21, glutamate 81, and histidine 154. The Mg(2+) site is built by aspartate 21, glutamate 81, and histidine 154.

This sequence belongs to the RuvC family. As to quaternary structure, homodimer which binds Holliday junction (HJ) DNA. The HJ becomes 2-fold symmetrical on binding to RuvC with unstacked arms; it has a different conformation from HJ DNA in complex with RuvA. In the full resolvosome a probable DNA-RuvA(4)-RuvB(12)-RuvC(2) complex forms which resolves the HJ. Mg(2+) serves as cofactor.

It is found in the cytoplasm. It catalyses the reaction Endonucleolytic cleavage at a junction such as a reciprocal single-stranded crossover between two homologous DNA duplexes (Holliday junction).. Its function is as follows. The RuvA-RuvB-RuvC complex processes Holliday junction (HJ) DNA during genetic recombination and DNA repair. Endonuclease that resolves HJ intermediates. Cleaves cruciform DNA by making single-stranded nicks across the HJ at symmetrical positions within the homologous arms, yielding a 5'-phosphate and a 3'-hydroxyl group; requires a central core of homology in the junction. The consensus cleavage sequence is 5'-(A/T)TT(C/G)-3'. Cleavage occurs on the 3'-side of the TT dinucleotide at the point of strand exchange. HJ branch migration catalyzed by RuvA-RuvB allows RuvC to scan DNA until it finds its consensus sequence, where it cleaves and resolves the cruciform DNA. The polypeptide is Crossover junction endodeoxyribonuclease RuvC (Treponema denticola (strain ATCC 35405 / DSM 14222 / CIP 103919 / JCM 8153 / KCTC 15104)).